The primary structure comprises 116 residues: Large ribosomal subunit protein bL19 (116 aa).

The protein belongs to the bacterial ribosomal protein bL19 family.

In terms of biological role, this protein is located at the 30S-50S ribosomal subunit interface and may play a role in the structure and function of the aminoacyl-tRNA binding site. This chain is Large ribosomal subunit protein bL19, found in Clostridium beijerinckii (strain ATCC 51743 / NCIMB 8052) (Clostridium acetobutylicum).